Here is a 138-residue protein sequence, read N- to C-terminus: Nucleoside diphosphate kinase (138 aa).

Positions 9, 57, 85, 91, 102, and 112 each coordinate ATP. The active-site Pros-phosphohistidine intermediate is His115.

It belongs to the NDK family. Homotetramer. Mg(2+) is required as a cofactor.

It is found in the cytoplasm. It catalyses the reaction a 2'-deoxyribonucleoside 5'-diphosphate + ATP = a 2'-deoxyribonucleoside 5'-triphosphate + ADP. The enzyme catalyses a ribonucleoside 5'-diphosphate + ATP = a ribonucleoside 5'-triphosphate + ADP. In terms of biological role, major role in the synthesis of nucleoside triphosphates other than ATP. The ATP gamma phosphate is transferred to the NDP beta phosphate via a ping-pong mechanism, using a phosphorylated active-site intermediate. In Deinococcus radiodurans (strain ATCC 13939 / DSM 20539 / JCM 16871 / CCUG 27074 / LMG 4051 / NBRC 15346 / NCIMB 9279 / VKM B-1422 / R1), this protein is Nucleoside diphosphate kinase.